Consider the following 219-residue polypeptide: Thiamine-phosphate synthase (219 aa).

4-amino-2-methyl-5-(diphosphooxymethyl)pyrimidine contacts are provided by residues 44–48 (QFREK) and Asn79. Residues Asp80 and Asp99 each contribute to the Mg(2+) site. Position 117 (Ser117) interacts with 4-amino-2-methyl-5-(diphosphooxymethyl)pyrimidine. 143 to 145 (TST) contributes to the 2-[(2R,5Z)-2-carboxy-4-methylthiazol-5(2H)-ylidene]ethyl phosphate binding site. Lys146 is a binding site for 4-amino-2-methyl-5-(diphosphooxymethyl)pyrimidine. 2-[(2R,5Z)-2-carboxy-4-methylthiazol-5(2H)-ylidene]ethyl phosphate is bound by residues Gly175 and 195–196 (IS).

This sequence belongs to the thiamine-phosphate synthase family. Requires Mg(2+) as cofactor.

It carries out the reaction 2-[(2R,5Z)-2-carboxy-4-methylthiazol-5(2H)-ylidene]ethyl phosphate + 4-amino-2-methyl-5-(diphosphooxymethyl)pyrimidine + 2 H(+) = thiamine phosphate + CO2 + diphosphate. It catalyses the reaction 2-(2-carboxy-4-methylthiazol-5-yl)ethyl phosphate + 4-amino-2-methyl-5-(diphosphooxymethyl)pyrimidine + 2 H(+) = thiamine phosphate + CO2 + diphosphate. The catalysed reaction is 4-methyl-5-(2-phosphooxyethyl)-thiazole + 4-amino-2-methyl-5-(diphosphooxymethyl)pyrimidine + H(+) = thiamine phosphate + diphosphate. Its pathway is cofactor biosynthesis; thiamine diphosphate biosynthesis; thiamine phosphate from 4-amino-2-methyl-5-diphosphomethylpyrimidine and 4-methyl-5-(2-phosphoethyl)-thiazole: step 1/1. In terms of biological role, condenses 4-methyl-5-(beta-hydroxyethyl)thiazole monophosphate (THZ-P) and 2-methyl-4-amino-5-hydroxymethyl pyrimidine pyrophosphate (HMP-PP) to form thiamine monophosphate (TMP). In Bacillus cereus (strain 03BB102), this protein is Thiamine-phosphate synthase.